The primary structure comprises 445 residues: Tubulin beta-7 chain (445 aa).

8 residues coordinate GTP: Gln-11, Glu-69, Ser-138, Gly-142, Thr-143, Gly-144, Asn-204, and Asn-226. Glu-69 serves as a coordination point for Mg(2+). A disordered region spans residues 421–445 (EYQQYQDATAEDEEYEEEEEEEEET). Residues 429–445 (TAEDEEYEEEEEEEEET) are compositionally biased toward acidic residues.

The protein belongs to the tubulin family. As to quaternary structure, dimer of alpha and beta chains. A typical microtubule is a hollow water-filled tube with an outer diameter of 25 nm and an inner diameter of 15 nM. Alpha-beta heterodimers associate head-to-tail to form protofilaments running lengthwise along the microtubule wall with the beta-tubulin subunit facing the microtubule plus end conferring a structural polarity. Microtubules usually have 13 protofilaments but different protofilament numbers can be found in some organisms and specialized cells. The cofactor is Mg(2+).

It localises to the cytoplasm. It is found in the cytoskeleton. In terms of biological role, tubulin is the major constituent of microtubules, a cylinder consisting of laterally associated linear protofilaments composed of alpha- and beta-tubulin heterodimers. Microtubules grow by the addition of GTP-tubulin dimers to the microtubule end, where a stabilizing cap forms. Below the cap, tubulin dimers are in GDP-bound state, owing to GTPase activity of alpha-tubulin. In Zea mays (Maize), this protein is Tubulin beta-7 chain (TUBB7).